A 204-amino-acid polypeptide reads, in one-letter code: Holliday junction branch migration complex subunit RuvA (204 aa).

Residues Met1 to Ser64 are domain I. The tract at residues His65–Lys143 is domain II. The interval Ser144 to Leu155 is flexible linker. Positions Asp156–Leu204 are domain III.

The protein belongs to the RuvA family. Homotetramer. Forms an RuvA(8)-RuvB(12)-Holliday junction (HJ) complex. HJ DNA is sandwiched between 2 RuvA tetramers; dsDNA enters through RuvA and exits via RuvB. An RuvB hexamer assembles on each DNA strand where it exits the tetramer. Each RuvB hexamer is contacted by two RuvA subunits (via domain III) on 2 adjacent RuvB subunits; this complex drives branch migration. In the full resolvosome a probable DNA-RuvA(4)-RuvB(12)-RuvC(2) complex forms which resolves the HJ.

The protein localises to the cytoplasm. Functionally, the RuvA-RuvB-RuvC complex processes Holliday junction (HJ) DNA during genetic recombination and DNA repair, while the RuvA-RuvB complex plays an important role in the rescue of blocked DNA replication forks via replication fork reversal (RFR). RuvA specifically binds to HJ cruciform DNA, conferring on it an open structure. The RuvB hexamer acts as an ATP-dependent pump, pulling dsDNA into and through the RuvAB complex. HJ branch migration allows RuvC to scan DNA until it finds its consensus sequence, where it cleaves and resolves the cruciform DNA. This Histophilus somni (strain 2336) (Haemophilus somnus) protein is Holliday junction branch migration complex subunit RuvA.